A 684-amino-acid chain; its full sequence is Threonine--tRNA ligase (684 aa).

The 66-residue stretch at 1–66 (MTAVASSAPA…DTDVEVTPVA (66 aa)) folds into the TGS domain. The interval 261–567 (DHRKLGVELD…LTEHYAGAFP (307 aa)) is catalytic. 3 residues coordinate Zn(2+): C366, H417, and H544.

The protein belongs to the class-II aminoacyl-tRNA synthetase family. Homodimer. Zn(2+) serves as cofactor.

It localises to the cytoplasm. It catalyses the reaction tRNA(Thr) + L-threonine + ATP = L-threonyl-tRNA(Thr) + AMP + diphosphate + H(+). Catalyzes the attachment of threonine to tRNA(Thr) in a two-step reaction: L-threonine is first activated by ATP to form Thr-AMP and then transferred to the acceptor end of tRNA(Thr). Also edits incorrectly charged L-seryl-tRNA(Thr). This chain is Threonine--tRNA ligase, found in Mycolicibacterium smegmatis (strain ATCC 700084 / mc(2)155) (Mycobacterium smegmatis).